A 147-amino-acid polypeptide reads, in one-letter code: Signal peptidase complex subunit 3 (147 aa).

Over 1–6 the chain is Cytoplasmic; that stretch reads MHSWVQ. The helical; Signal-anchor for type II membrane protein transmembrane segment at 7–29 threads the bilayer; it reads RLLTTATTAALLLLAACCAASAL. Topologically, residues 30 to 147 are lumenal; it reads DAFHVPSVQA…EFNLPDSYTS (118 aa).

The protein belongs to the SPCS3 family. Component of the signal peptidase complex (SPC) composed of a catalytic subunit SEC11 and three accessory subunits SPCS1, SPCS2 and SPCS3. The complex induces a local thinning of the ER membrane which is used to measure the length of the signal peptide (SP) h-region of protein substrates. This ensures the selectivity of the complex towards h-regions shorter than 18-20 amino acids.

Its subcellular location is the endoplasmic reticulum membrane. Essential component of the signal peptidase complex (SPC) which catalyzes the cleavage of N-terminal signal sequences from nascent proteins as they are translocated into the lumen of the endoplasmic reticulum. Essential for the SPC catalytic activity, possibly by stabilizing and positioning the active center of the complex close to the lumenal surface. This is Signal peptidase complex subunit 3 from Oryza sativa subsp. japonica (Rice).